We begin with the raw amino-acid sequence, 138 residues long: Large ribosomal subunit protein uL16 (138 aa).

Positions 1–13 (MLQPARRKFRKEQ) are enriched in basic residues. The tract at residues 1 to 22 (MLQPARRKFRKEQKGRNTGVAT) is disordered.

It belongs to the universal ribosomal protein uL16 family. As to quaternary structure, part of the 50S ribosomal subunit.

In terms of biological role, binds 23S rRNA and is also seen to make contacts with the A and possibly P site tRNAs. This Acidovorax ebreus (strain TPSY) (Diaphorobacter sp. (strain TPSY)) protein is Large ribosomal subunit protein uL16.